We begin with the raw amino-acid sequence, 1082 residues long: Error-prone DNA polymerase (1082 aa).

The protein belongs to the DNA polymerase type-C family. DnaE2 subfamily.

It is found in the cytoplasm. It catalyses the reaction DNA(n) + a 2'-deoxyribonucleoside 5'-triphosphate = DNA(n+1) + diphosphate. In terms of biological role, DNA polymerase involved in damage-induced mutagenesis and translesion synthesis (TLS). It is not the major replicative DNA polymerase. In Xanthomonas campestris pv. campestris (strain 8004), this protein is Error-prone DNA polymerase.